The chain runs to 891 residues: von Willebrand factor A domain-containing protein 7 (891 aa).

The N-terminal stretch at 1 to 28 (MLPVEVPLSHLGPPILLLLQLLLPPTSA) is a signal peptide. N-linked (GlcNAc...) asparagine glycosylation occurs at asparagine 55. The segment at 238 to 273 (PKPPGKCSHGGHFDQSSSQPPRGGINKDSTSPSFSP) is disordered. Positions 314–499 (ASSLSFVLDT…DVAAIVGESM (186 aa)) constitute a VWFA domain.

In terms of tissue distribution, expressed at low level in many tissues.

The protein resides in the secreted. The sequence is that of von Willebrand factor A domain-containing protein 7 (Vwa7) from Mus musculus (Mouse).